A 190-amino-acid chain; its full sequence is Translation initiation factor IF-3 (190 aa).

This sequence belongs to the IF-3 family. As to quaternary structure, monomer.

Its subcellular location is the cytoplasm. Its function is as follows. IF-3 binds to the 30S ribosomal subunit and shifts the equilibrium between 70S ribosomes and their 50S and 30S subunits in favor of the free subunits, thus enhancing the availability of 30S subunits on which protein synthesis initiation begins. The sequence is that of Translation initiation factor IF-3 from Prochlorococcus marinus (strain AS9601).